Consider the following 131-residue polypeptide: Small ribosomal subunit protein uS11 (131 aa).

The protein belongs to the universal ribosomal protein uS11 family. As to quaternary structure, part of the 30S ribosomal subunit. Interacts with proteins S7 and S18. Binds to IF-3.

Functionally, located on the platform of the 30S subunit, it bridges several disparate RNA helices of the 16S rRNA. Forms part of the Shine-Dalgarno cleft in the 70S ribosome. The chain is Small ribosomal subunit protein uS11 from Cellvibrio japonicus (strain Ueda107) (Pseudomonas fluorescens subsp. cellulosa).